A 185-amino-acid polypeptide reads, in one-letter code: Neuronal vesicle trafficking-associated protein 1 (185 aa).

At 1 to 82 (MVKLGNNFSE…ITEGVSERFK (82 aa)) the chain is on the cytoplasmic side. The helical; Signal-anchor for type II membrane protein transmembrane segment at 83 to 103 (VTVLVLFALAFLTCVVFLVVY) threads the bilayer. The Lumenal segment spans residues 104–185 (KVYKYDHTCP…QETEAAEKSA (82 aa)).

The protein belongs to the NSG family.

The protein localises to the membrane. The protein resides in the golgi apparatus. Its subcellular location is the trans-Golgi network membrane. It is found in the endosome membrane. It localises to the cell projection. The protein localises to the dendrite. The protein resides in the early endosome membrane. Its subcellular location is the late endosome membrane. It is found in the lysosome lumen. It localises to the recycling endosome membrane. The protein localises to the cytoplasmic vesicle membrane. The protein resides in the golgi stack membrane. Its subcellular location is the endosome. It is found in the multivesicular body membrane. Functionally, plays a role in the recycling mechanism in neurons of multiple receptors and acts at the level of early endosomes to promote sorting of receptors toward a recycling pathway. The protein is Neuronal vesicle trafficking-associated protein 1 of Gallus gallus (Chicken).